The chain runs to 170 residues: RxLR effector protein PITG_07555 (170 aa).

The first 17 residues, 1–17 (MQAYHLLLVCMYISCSA), serve as a signal peptide directing secretion. A RxLR-dEER motif is present at residues 50-62 (RALRTHNPDREER).

This sequence belongs to the RxLR effector family.

It is found in the secreted. It localises to the host cytoplasm. Its subcellular location is the host nucleus. Functionally, effector that enhances P.infestans colonization of Nicotiana benthamiana leaves. The polypeptide is RxLR effector protein PITG_07555 (Phytophthora infestans (strain T30-4) (Potato late blight agent)).